The primary structure comprises 570 residues: Dwarfin sma-4 (570 aa).

The disordered stretch occupies residues 115–134; that stretch reads SSQASSQPPPTPTVNPTPIP. The segment covering 121–134 has biased composition (pro residues); sequence QPPPTPTVNPTPIP. The 124-residue stretch at 150 to 273 folds into the MH1 domain; sequence QISHVLQCYQ…YERVVSNRIT (124 aa). C203, C247, C258, and H263 together coordinate Zn(2+). The 221-residue stretch at 350–570 folds into the MH2 domain; it reads WCSIIYYELD…LKNSSQFGSS (221 aa).

This sequence belongs to the dwarfin/SMAD family.

The protein localises to the cytoplasm. It is found in the nucleus. Involved in TGF-beta pathway. This is Dwarfin sma-4 (sma-4) from Caenorhabditis elegans.